A 238-amino-acid chain; its full sequence is Uridylate kinase (238 aa).

12-15 (KLSG) contacts ATP. UMP is bound at residue Gly54. ATP is bound by residues Gly55 and Arg59. UMP contacts are provided by residues Asp74 and 135-142 (TGNPFFTT). ATP-binding residues include Thr162, Tyr168, and Asp171.

The protein belongs to the UMP kinase family. In terms of assembly, homohexamer.

The protein localises to the cytoplasm. The catalysed reaction is UMP + ATP = UDP + ADP. It functions in the pathway pyrimidine metabolism; CTP biosynthesis via de novo pathway; UDP from UMP (UMPK route): step 1/1. Inhibited by UTP. In terms of biological role, catalyzes the reversible phosphorylation of UMP to UDP. The polypeptide is Uridylate kinase (Bordetella parapertussis (strain 12822 / ATCC BAA-587 / NCTC 13253)).